We begin with the raw amino-acid sequence, 522 residues long: Calcium-dependent protein kinase 14 (522 aa).

2 stretches are compositionally biased toward low complexity: residues 1-12 (MGNCCPPGSSSE) and 19-45 (SSGSSRPAGSAGAAASPATISPSAAPA). The segment at 1–58 (MGNCCPPGSSSEPDPPPASSGSSRPAGSAGAAASPATISPSAAPAPAKPPAPIGPVLG) is disordered. Gly2 is lipidated: N-myristoyl glycine. A Protein kinase domain is found at 68–326 (YTVGKELGRG…AYDVLNHPWI (259 aa)). Residues 74–82 (LGRGQFGVT) and Lys97 each bind ATP. Residue Asp192 is the Proton acceptor of the active site. Residues 332 to 362 (APDTPLDNAVLGRLKQFRAMNQFKKAALRVI) form an autoinhibitory domain region. EF-hand domains are found at residues 369 to 404 (EEIRGLKEMFKSMDSDNSGTITVDELRKGLAKKGTK), 405 to 440 (LTEAEVQQLMEAADADGNGTIDYEEFITATMHMNRM), 441 to 476 (DREEHLYTAFQYFDKDNSGYITIEELEQALREKGLM), and 480 to 511 (EIKDIISEVDADNDGRINYTEFVAMMRKGDPE). The Ca(2+) site is built by Asp382, Asp384, Ser386, Thr388, Glu393, Asp418, Asp420, Asn422, Thr424, Glu429, Asp454, Asp456, Ser458, Tyr460, Glu465, Asp489, Asp491, Asp493, Arg495, and Glu500.

Belongs to the protein kinase superfamily. Ser/Thr protein kinase family. CDPK subfamily.

It localises to the membrane. The enzyme catalyses L-seryl-[protein] + ATP = O-phospho-L-seryl-[protein] + ADP + H(+). It carries out the reaction L-threonyl-[protein] + ATP = O-phospho-L-threonyl-[protein] + ADP + H(+). Activated by calcium. Autophosphorylation may play an important role in the regulation of the kinase activity. Functionally, may play a role in signal transduction pathways that involve calcium as a second messenger. The chain is Calcium-dependent protein kinase 14 from Oryza sativa subsp. japonica (Rice).